The primary structure comprises 154 residues: Peptidoglycan amidase Tse1 (154 aa).

Cys-7 and Cys-148 form a disulfide bridge. The active-site Nucleophile is Cys-30. Catalysis depends on His-91, which acts as the Proton acceptor.

In terms of assembly, forms a heterotetramer with Tsi1 consisting of two Tse1 dimers and two Tsi1 dimers. Formation of the complex inactivates Tse1 enzymatic activity.

The protein localises to the host membrane. The protein resides in the secreted. It carries out the reaction Hydrolysis of gamma-D-glutamyl bonds to the L-terminus (position 7) of meso-diaminopimelic acid (meso-A2pm) in 7-(L-Ala-gamma-D-Glu)-meso-A2pm and 7-(L-Ala-gamma-D-Glu)-7-(D-Ala)-meso-A2pm. It is required that the D-terminal amino and carboxy groups of meso-A2pm are unsubstituted.. Its function is as follows. Toxin secreted by the H1 type VI (H1-T6SS) secretion system into the periplasm of recipient cells. Degrades peptidoglycan via amidase activity thereby helping itself to compete with other bacteria. To protect itself, the bacterium synthesizes immunity protein Tsi1 that specifically interacts with and inactivates cognate toxin. The polypeptide is Peptidoglycan amidase Tse1 (Pseudomonas aeruginosa (strain ATCC 15692 / DSM 22644 / CIP 104116 / JCM 14847 / LMG 12228 / 1C / PRS 101 / PAO1)).